The chain runs to 343 residues: Aspartate carbamoyltransferase catalytic subunit (343 aa).

Positions 91 and 92 each coordinate carbamoyl phosphate. Lysine 119 contributes to the L-aspartate binding site. The carbamoyl phosphate site is built by arginine 141, histidine 171, and glutamine 174. L-aspartate-binding residues include arginine 204 and arginine 259. 2 residues coordinate carbamoyl phosphate: glycine 300 and proline 301.

The protein belongs to the aspartate/ornithine carbamoyltransferase superfamily. ATCase family. Heterododecamer (2C3:3R2) of six catalytic PyrB chains organized as two trimers (C3), and six regulatory PyrI chains organized as three dimers (R2).

The catalysed reaction is carbamoyl phosphate + L-aspartate = N-carbamoyl-L-aspartate + phosphate + H(+). It participates in pyrimidine metabolism; UMP biosynthesis via de novo pathway; (S)-dihydroorotate from bicarbonate: step 2/3. Functionally, catalyzes the condensation of carbamoyl phosphate and aspartate to form carbamoyl aspartate and inorganic phosphate, the committed step in the de novo pyrimidine nucleotide biosynthesis pathway. In Burkholderia cenocepacia (strain HI2424), this protein is Aspartate carbamoyltransferase catalytic subunit.